A 227-amino-acid polypeptide reads, in one-letter code: Ribosomal RNA large subunit methyltransferase E (227 aa).

Positions 78, 80, 103, 119, and 143 each coordinate S-adenosyl-L-methionine. Residue Lys183 is the Proton acceptor of the active site.

This sequence belongs to the class I-like SAM-binding methyltransferase superfamily. RNA methyltransferase RlmE family.

It is found in the cytoplasm. It carries out the reaction uridine(2552) in 23S rRNA + S-adenosyl-L-methionine = 2'-O-methyluridine(2552) in 23S rRNA + S-adenosyl-L-homocysteine + H(+). Specifically methylates the uridine in position 2552 of 23S rRNA at the 2'-O position of the ribose in the fully assembled 50S ribosomal subunit. The protein is Ribosomal RNA large subunit methyltransferase E of Rickettsia africae (strain ESF-5).